The primary structure comprises 584 residues: Breast carcinoma-amplified sequence 1 (584 aa).

3 disordered regions span residues 1–29 (MGNQ…NASA), 59–280 (VATS…AAAI), and 297–377 (PNKA…GKLF). Polar residues-rich tracts occupy residues 59–69 (VATSSPETTEI) and 112–128 (ADSS…SNKA). Phosphoserine is present on residues serine 124 and serine 192. 3 stretches are compositionally biased toward basic and acidic residues: residues 186 to 226 (SKPK…KVDE), 238 to 252 (PAGK…KEGQ), and 300 to 311 (AETKKDPEDTGA). Serine 314 bears the Phosphoserine mark. Residues 314–354 (SPTTSADLKSDKANFTSQETQGAGKNSKGCNPSGHTQSVTT) show a composition bias toward polar residues. The span at 357-366 (PAKEGTKEKS) shows a compositional bias: basic and acidic residues. Serine 381 and serine 399 each carry phosphoserine. A disordered region spans residues 415–584 (TVDLNEGDAA…VSIGPVGKSK (170 aa)). Positions 428 to 439 (TEAKLKREESKP) are enriched in basic and acidic residues. The residue at position 480 (threonine 480) is a Phosphothreonine. Residues 494–506 (KGKEGSSKDKKSA) show a composition bias toward basic and acidic residues. Positions 525 to 540 (CTEQATVDTNSLQNGD) are enriched in polar residues. The segment covering 541 to 550 (KLQKRPEKRQ) has biased composition (basic and acidic residues). Position 552 is a phosphoserine (serine 552). Residues 565–584 (MLDAQVQTDPVSIGPVGKSK) form an interacts with DYNLL1 and DYNLL2 region.

As to quaternary structure, homodimer. Interacts with DYNLL1 and DYNLL2. As to expression, highly expressed in the brain and, more specifically, in oligodendrocytes (at protein level). Expressed in the prostate, and at lower levels in testis, intestine and colon. Overexpressed in most breast cancer cell lines and down-regulated in some colorectal tumors.

The protein localises to the cytoplasm. Its function is as follows. Required for myelination. This chain is Breast carcinoma-amplified sequence 1 (BCAS1), found in Homo sapiens (Human).